The chain runs to 210 residues: Dephospho-CoA kinase (210 aa).

The DPCK domain maps to valine 15–lysine 210. Glycine 23–alanine 28 provides a ligand contact to ATP.

The protein belongs to the CoaE family.

Its subcellular location is the cytoplasm. The catalysed reaction is 3'-dephospho-CoA + ATP = ADP + CoA + H(+). The protein operates within cofactor biosynthesis; coenzyme A biosynthesis; CoA from (R)-pantothenate: step 5/5. Its function is as follows. Catalyzes the phosphorylation of the 3'-hydroxyl group of dephosphocoenzyme A to form coenzyme A. The protein is Dephospho-CoA kinase of Pseudoalteromonas translucida (strain TAC 125).